The sequence spans 422 residues: 3-phosphoshikimate 1-carboxyvinyltransferase (422 aa).

The 3-phosphoshikimate site is built by lysine 24, serine 25, and arginine 29. Lysine 24 is a binding site for phosphoenolpyruvate. Residues glycine 93 and arginine 121 each coordinate phosphoenolpyruvate. Residues serine 164, serine 165, glutamine 166, glutamate 308, and histidine 335 each coordinate 3-phosphoshikimate. Glutamine 166 contacts phosphoenolpyruvate. Glutamate 308 serves as the catalytic Proton acceptor. Phosphoenolpyruvate-binding residues include arginine 339, arginine 380, and lysine 405.

Belongs to the EPSP synthase family. As to quaternary structure, monomer.

The protein resides in the cytoplasm. The catalysed reaction is 3-phosphoshikimate + phosphoenolpyruvate = 5-O-(1-carboxyvinyl)-3-phosphoshikimate + phosphate. Its pathway is metabolic intermediate biosynthesis; chorismate biosynthesis; chorismate from D-erythrose 4-phosphate and phosphoenolpyruvate: step 6/7. In terms of biological role, catalyzes the transfer of the enolpyruvyl moiety of phosphoenolpyruvate (PEP) to the 5-hydroxyl of shikimate-3-phosphate (S3P) to produce enolpyruvyl shikimate-3-phosphate and inorganic phosphate. In Saccharopolyspora erythraea (strain ATCC 11635 / DSM 40517 / JCM 4748 / NBRC 13426 / NCIMB 8594 / NRRL 2338), this protein is 3-phosphoshikimate 1-carboxyvinyltransferase.